The primary structure comprises 160 residues: ATP synthase subunit b (160 aa).

Residues 13-33 (VNLAIVIGVLVWFLRGFLGGI) form a helical membrane-spanning segment.

The protein belongs to the ATPase B chain family. In terms of assembly, F-type ATPases have 2 components, F(1) - the catalytic core - and F(0) - the membrane proton channel. F(1) has five subunits: alpha(3), beta(3), gamma(1), delta(1), epsilon(1). F(0) has four main subunits: a(1), b(1), b'(1) and c(10-14). The alpha and beta chains form an alternating ring which encloses part of the gamma chain. F(1) is attached to F(0) by a central stalk formed by the gamma and epsilon chains, while a peripheral stalk is formed by the delta, b and b' chains.

It is found in the cellular thylakoid membrane. Functionally, f(1)F(0) ATP synthase produces ATP from ADP in the presence of a proton or sodium gradient. F-type ATPases consist of two structural domains, F(1) containing the extramembraneous catalytic core and F(0) containing the membrane proton channel, linked together by a central stalk and a peripheral stalk. During catalysis, ATP synthesis in the catalytic domain of F(1) is coupled via a rotary mechanism of the central stalk subunits to proton translocation. Its function is as follows. Component of the F(0) channel, it forms part of the peripheral stalk, linking F(1) to F(0). In Parasynechococcus marenigrum (strain WH8102), this protein is ATP synthase subunit b.